The following is a 334-amino-acid chain: Glycerol-3-phosphate dehydrogenase [NAD(P)+] (334 aa).

3 residues coordinate NADPH: W13, R33, and K106. Residues K106, G137, and S139 each coordinate sn-glycerol 3-phosphate. A141 contacts NADPH. Sn-glycerol 3-phosphate contacts are provided by K192, D245, S255, R256, and N257. K192 (proton acceptor) is an active-site residue. Residue R256 participates in NADPH binding. NADPH contacts are provided by V280 and E282.

It belongs to the NAD-dependent glycerol-3-phosphate dehydrogenase family.

It localises to the cytoplasm. It catalyses the reaction sn-glycerol 3-phosphate + NAD(+) = dihydroxyacetone phosphate + NADH + H(+). It carries out the reaction sn-glycerol 3-phosphate + NADP(+) = dihydroxyacetone phosphate + NADPH + H(+). It participates in membrane lipid metabolism; glycerophospholipid metabolism. Its function is as follows. Catalyzes the reduction of the glycolytic intermediate dihydroxyacetone phosphate (DHAP) to sn-glycerol 3-phosphate (G3P), the key precursor for phospholipid synthesis. In Chlamydia felis (strain Fe/C-56) (Chlamydophila felis), this protein is Glycerol-3-phosphate dehydrogenase [NAD(P)+].